A 180-amino-acid chain; its full sequence is Isopentenyl-diphosphate Delta-isomerase (180 aa).

Mn(2+) contacts are provided by His22 and His28. One can recognise a Nudix hydrolase domain in the interval Leu26–Ile160. Cys62 is a catalytic residue. Cys62 serves as a coordination point for Mg(2+). His64 contributes to the Mn(2+) binding site. Glu82 provides a ligand contact to Mg(2+). Mn(2+) is bound by residues Glu108 and Glu110. Glu110 is a catalytic residue.

This sequence belongs to the IPP isomerase type 1 family. It depends on Mg(2+) as a cofactor. Requires Mn(2+) as cofactor.

It is found in the cytoplasm. The enzyme catalyses isopentenyl diphosphate = dimethylallyl diphosphate. It functions in the pathway isoprenoid biosynthesis; dimethylallyl diphosphate biosynthesis; dimethylallyl diphosphate from isopentenyl diphosphate: step 1/1. In terms of biological role, catalyzes the 1,3-allylic rearrangement of the homoallylic substrate isopentenyl (IPP) to its highly electrophilic allylic isomer, dimethylallyl diphosphate (DMAPP). The chain is Isopentenyl-diphosphate Delta-isomerase from Ruegeria pomeroyi (strain ATCC 700808 / DSM 15171 / DSS-3) (Silicibacter pomeroyi).